Consider the following 277-residue polypeptide: Diaminopimelate epimerase (277 aa).

Substrate is bound by residues N13, Q46, and N66. C75 functions as the Proton donor in the catalytic mechanism. Residues 76-77 (GN), N159, N192, and 210-211 (ER) each bind substrate. Residue C219 is the Proton acceptor of the active site. A substrate-binding site is contributed by 220–221 (GT).

This sequence belongs to the diaminopimelate epimerase family. In terms of assembly, homodimer.

Its subcellular location is the cytoplasm. It catalyses the reaction (2S,6S)-2,6-diaminopimelate = meso-2,6-diaminopimelate. The protein operates within amino-acid biosynthesis; L-lysine biosynthesis via DAP pathway; DL-2,6-diaminopimelate from LL-2,6-diaminopimelate: step 1/1. Functionally, catalyzes the stereoinversion of LL-2,6-diaminopimelate (L,L-DAP) to meso-diaminopimelate (meso-DAP), a precursor of L-lysine and an essential component of the bacterial peptidoglycan. This chain is Diaminopimelate epimerase, found in Azoarcus sp. (strain BH72).